Here is a 370-residue protein sequence, read N- to C-terminus: Neutral protease 2 homolog AFUB_070680 (370 aa).

Residues 1–19 form the signal peptide; the sequence is MKVTILASAILALINGALA. Positions 20-172 are excised as a propeptide; the sequence is LPANTPTLDV…PQAIKLLDRR (153 aa). Intrachain disulfides connect Cys-178–Cys-250 and Cys-257–Cys-275. Position 300 (His-300) interacts with Zn(2+). Glu-301 is a catalytic residue. Positions 304 and 315 each coordinate Zn(2+).

Belongs to the peptidase M35 family. Zn(2+) serves as cofactor.

The protein resides in the secreted. It carries out the reaction Preferential cleavage of bonds with hydrophobic residues in P1'. Also 3-Asn-|-Gln-4 and 8-Gly-|-Ser-9 bonds in insulin B chain.. Functionally, secreted metalloproteinase that allows assimilation of proteinaceous substrates. Shows high activities on basic nuclear substrates such as histone and protamine. May be involved in virulence. The polypeptide is Neutral protease 2 homolog AFUB_070680 (Aspergillus fumigatus (strain CBS 144.89 / FGSC A1163 / CEA10) (Neosartorya fumigata)).